The following is a 386-amino-acid chain: Vesicle-associated protein 2-2 (386 aa).

Methionine 1 is modified (N-acetylmethionine). The Cytoplasmic segment spans residues 1–363; the sequence is MNMPLLDIQP…TKKIVKEVHN (363 aa). Positions 5 to 125 constitute an MSP domain; it reads LLDIQPRTLQ…EENKLRVTLV (121 aa). At serine 279 the chain carries Phosphoserine. The stretch at 300–353 forms a coiled coil; sequence ELKLVKDIEEMKLKVDALESKLKQADSTISKLMEERSISSQHRQSLQHELAELR. The helical; Anchor for type IV membrane protein transmembrane segment at 364 to 384 threads the bilayer; that stretch reads GFPLLYVCVVAFIAYVIGHFL.

It belongs to the VAMP-associated protein (VAP) (TC 9.B.17) family. As to quaternary structure, interacts with cowpea mosaic virus (CPMV) NTP-binding protein (NTB).

The protein localises to the endoplasmic reticulum membrane. Functionally, may play a role in vesicle trafficking. This Arabidopsis thaliana (Mouse-ear cress) protein is Vesicle-associated protein 2-2 (PVA22).